The chain runs to 1315 residues: Serine-aspartate repeat-containing protein D (1315 aa).

The N-terminal stretch at 1–35 is a signal peptide; the sequence is MLNRENKTAITRKGMVSNRLNKFSIRKYTVGTASI. Residues 23 to 34 carry the YSIRK-G/S signaling motif motif; the sequence is FSIRKYTVGTAS. The ligand binding A region stretch occupies residues 36 to 568; sequence LVGTTLIFGL…NNQSGGAGQE (533 aa). The segment at 54–185 is disordered; that stretch reads ESTNKELNEA…NKKVDAKTES (132 aa). Polar residues-rich tracts occupy residues 62-71 and 94-108; these read EATTSASDNQ and EMVS…SNGN. Positions 130 to 145 are enriched in basic and acidic residues; sequence KSDEQASPKSTNEDLN. Composition is skewed to polar residues over residues 146–155 and 163–173; these read TKQTISNQEA and NKSVVNVQPTN. Basic and acidic residues predominate over residues 174–183; the sequence is EENKKVDAKT. 5 CNA-B domains span residues 569 to 680, 681 to 791, 792 to 901, 902 to 1012, and 1013 to 1123; these read VYKI…IYKP, KYNL…YKTP, KYNL…FYKP, TYNL…YKTP, and KYSL…EEET. Disordered regions lie at residues 857-883, 972-992, and 1078-1291; these read ETPS…TSTT, YTPT…GLTT, and EKPA…SNNA. 2 stretches are compositionally biased toward polar residues: residues 860–869 and 972–981; these read SGYTPTQVGS and YTPTSVTSGN. 4 stretches are compositionally biased toward acidic residues: residues 1091–1101, 1118–1134, 1142–1164, and 1172–1254; these read TEDDKDADGGE, YYEE…DSDS, and SDSD…DSDS. The LPXTG sorting signal motif lies at 1278–1282; that stretch reads LPETG. T1281 carries the pentaglycyl murein peptidoglycan amidated threonine modification. The propeptide at 1282–1315 is removed by sortase; the sequence is GNENSGSNNATLFGGLFAALGSLLLFGRRKKQNK.

The protein belongs to the serine-aspartate repeat-containing protein (SDr) family. As to quaternary structure, interacts with host DSG1; this interaction increases S.aureus adherence to keratinocytes. In terms of processing, anchored to the cell wall by sortase A.

The protein resides in the secreted. It localises to the cell wall. Cell surface-associated calcium-binding protein which plays an important role in adhesion and pathogenesis. Mediates interactions with components of the extracellular matrix such as host DSG1 to promote bacterial adhesion to host cells. Contributes to the resistance to killing by innate immune components such as neutrophils present in blood and thus attenuates bacterial clearance. This chain is Serine-aspartate repeat-containing protein D (sdrD), found in Staphylococcus aureus (strain Newman).